Reading from the N-terminus, the 38-residue chain is Large ribosomal subunit protein bL36 (38 aa).

It belongs to the bacterial ribosomal protein bL36 family.

This Myxococcus xanthus (strain DK1622) protein is Large ribosomal subunit protein bL36.